Reading from the N-terminus, the 171-residue chain is tRNA-splicing endonuclease (171 aa).

Catalysis depends on residues Tyr-110, His-117, and Lys-148.

It belongs to the tRNA-intron endonuclease family. Archaeal short subfamily. In terms of assembly, homotetramer; although the tetramer contains four active sites, only two participate in the cleavage. Therefore, it should be considered as a dimer of dimers.

The enzyme catalyses pretRNA = a 3'-half-tRNA molecule with a 5'-OH end + a 5'-half-tRNA molecule with a 2',3'-cyclic phosphate end + an intron with a 2',3'-cyclic phosphate and a 5'-hydroxyl terminus.. Endonuclease that removes tRNA introns. Cleaves pre-tRNA at the 5'- and 3'-splice sites to release the intron. The products are an intron and two tRNA half-molecules bearing 2',3' cyclic phosphate and 5'-OH termini. Recognizes a pseudosymmetric substrate in which 2 bulged loops of 3 bases are separated by a stem of 4 bp. This chain is tRNA-splicing endonuclease, found in Thermococcus onnurineus (strain NA1).